Here is a 63-residue protein sequence, read N- to C-terminus: Cytochrome c oxidase subunit 7C, mitochondrial (63 aa).

A mitochondrion-targeting transit peptide spans 1–16 (MWGQGVRRFTTSVVRR). Over 17–33 (SHYEEGPGKNLPFSVEN) the chain is Mitochondrial matrix. An N6-acetyllysine; alternate modification is found at lysine 25. An N6-succinyllysine; alternate modification is found at lysine 25. A helical transmembrane segment spans residues 34–60 (KWRLLAMMTLYLGSGFAAPFFIVRHQL). Residues 61–63 (LKK) lie on the Mitochondrial intermembrane side of the membrane.

The protein belongs to the cytochrome c oxidase VIIc family. Component of the cytochrome c oxidase (complex IV, CIV), a multisubunit enzyme composed of 14 subunits. The complex is composed of a catalytic core of 3 subunits MT-CO1, MT-CO2 and MT-CO3, encoded in the mitochondrial DNA, and 11 supernumerary subunits COX4I, COX5A, COX5B, COX6A, COX6B, COX6C, COX7A, COX7B, COX7C, COX8 and NDUFA4, which are encoded in the nuclear genome. The complex exists as a monomer or a dimer and forms supercomplexes (SCs) in the inner mitochondrial membrane with NADH-ubiquinone oxidoreductase (complex I, CI) and ubiquinol-cytochrome c oxidoreductase (cytochrome b-c1 complex, complex III, CIII), resulting in different assemblies (supercomplex SCI(1)III(2)IV(1) and megacomplex MCI(2)III(2)IV(2)). Interacts with RAB5IF.

It localises to the mitochondrion inner membrane. The protein operates within energy metabolism; oxidative phosphorylation. In terms of biological role, component of the cytochrome c oxidase, the last enzyme in the mitochondrial electron transport chain which drives oxidative phosphorylation. The respiratory chain contains 3 multisubunit complexes succinate dehydrogenase (complex II, CII), ubiquinol-cytochrome c oxidoreductase (cytochrome b-c1 complex, complex III, CIII) and cytochrome c oxidase (complex IV, CIV), that cooperate to transfer electrons derived from NADH and succinate to molecular oxygen, creating an electrochemical gradient over the inner membrane that drives transmembrane transport and the ATP synthase. Cytochrome c oxidase is the component of the respiratory chain that catalyzes the reduction of oxygen to water. Electrons originating from reduced cytochrome c in the intermembrane space (IMS) are transferred via the dinuclear copper A center (CU(A)) of subunit 2 and heme A of subunit 1 to the active site in subunit 1, a binuclear center (BNC) formed by heme A3 and copper B (CU(B)). The BNC reduces molecular oxygen to 2 water molecules using 4 electrons from cytochrome c in the IMS and 4 protons from the mitochondrial matrix. The sequence is that of Cytochrome c oxidase subunit 7C, mitochondrial (COX7C) from Carlito syrichta (Philippine tarsier).